Here is a 360-residue protein sequence, read N- to C-terminus: F-box protein SKP2B (360 aa).

Positions 25 to 76 (ISEWKDIPVELLMKILNLVDDRTVIIASCICSGWRDAVSLGLTRLSLSWCKK) constitute an F-box domain. LRR repeat units lie at residues 77-99 (NMNSLVLSLAPKFVKLQTLVLRQ), 101-126 (KPQLEDNAVEAIANHCHELQDLDLSK), 127-152 (SSKITDHSLYSLARGCTNLTKLNLSG), 153-178 (CTSFSDTALAHLTRFCRKLKILNLCG), 180-205 (VEAVSDNTLQAIGENCNQLQSLNLGW), 206-231 (CENISDDGVMSLAYGCPDLRTLDLCS), 232-257 (CVLITDESVVALANRCIHLRSLGLYY), 258-301 (CRNI…NISQ), and 302-333 (CTYLTPSAVQAVCDTFPALHTCSGRHSLVMSG).

Its function is as follows. Component of SCF(SKP2B) E3 ubiquitin ligase complexes, which mediate the ubiquitination and subsequent proteasomal degradation of the cyclin-dependent kinase inhibitor KRP1. Does not interact with auxin. The polypeptide is F-box protein SKP2B (SKP2B) (Arabidopsis thaliana (Mouse-ear cress)).